We begin with the raw amino-acid sequence, 389 residues long: Chalcone synthase 3 (389 aa).

Residue cysteine 164 is part of the active site.

Belongs to the thiolase-like superfamily. Chalcone/stilbene synthases family.

The catalysed reaction is (E)-4-coumaroyl-CoA + 3 malonyl-CoA + 3 H(+) = 2',4,4',6'-tetrahydroxychalcone + 3 CO2 + 4 CoA. It participates in secondary metabolite biosynthesis; flavonoid biosynthesis. Functionally, the primary product of this enzyme is 4,2',4',6'-tetrahydroxychalcone (also termed naringenin-chalcone or chalcone) which can under specific conditions spontaneously isomerize into naringenin. The protein is Chalcone synthase 3 (CHS3) of Trifolium subterraneum (Subterranean clover).